Consider the following 228-residue polypeptide: Urease accessory protein UreF (228 aa).

Belongs to the UreF family. UreD, UreF and UreG form a complex that acts as a GTP-hydrolysis-dependent molecular chaperone, activating the urease apoprotein by helping to assemble the nickel containing metallocenter of UreC. The UreE protein probably delivers the nickel.

It localises to the cytoplasm. Its function is as follows. Required for maturation of urease via the functional incorporation of the urease nickel metallocenter. This Prochlorococcus marinus (strain AS9601) protein is Urease accessory protein UreF.